Consider the following 138-residue polypeptide: Large ribosomal subunit protein bL17 (138 aa).

Belongs to the bacterial ribosomal protein bL17 family. Part of the 50S ribosomal subunit. Contacts protein L32.

The protein is Large ribosomal subunit protein bL17 of Buchnera aphidicola subsp. Schizaphis graminum (strain Sg).